Consider the following 494-residue polypeptide: Vacuolar-processing enzyme (494 aa).

The N-terminal stretch at 1-20 (MTRLASGVLITLLVALAGIA) is a signal peptide. A glycan (N-linked (GlcNAc...) asparagine) is linked at asparagine 151. Histidine 178 is an active-site residue. The active-site Nucleophile is cysteine 220. The cysteines at positions 253 and 267 are disulfide-linked. Residue asparagine 336 is glycosylated (N-linked (GlcNAc...) asparagine). Cystine bridges form between cysteine 430–cysteine 460 and cysteine 442–cysteine 477.

It belongs to the peptidase C13 family. In terms of tissue distribution, high levels are seen in the flowers, a lower level expression is seen in the leaves, while very low levels are seen in the stems and roots.

In terms of biological role, asparagine-specific endopeptidase that may be involved in processing of proteins targeted to vacuoles that accumulate during ethylene-regulated processes such as flower opening and flavedo degreening. The sequence is that of Vacuolar-processing enzyme from Citrus sinensis (Sweet orange).